Consider the following 469-residue polypeptide: 3-isopropylmalate dehydratase large subunit (469 aa).

[4Fe-4S] cluster-binding residues include Cys347, Cys410, and Cys413.

It belongs to the aconitase/IPM isomerase family. LeuC type 1 subfamily. Heterodimer of LeuC and LeuD. It depends on [4Fe-4S] cluster as a cofactor.

It catalyses the reaction (2R,3S)-3-isopropylmalate = (2S)-2-isopropylmalate. Its pathway is amino-acid biosynthesis; L-leucine biosynthesis; L-leucine from 3-methyl-2-oxobutanoate: step 2/4. In terms of biological role, catalyzes the isomerization between 2-isopropylmalate and 3-isopropylmalate, via the formation of 2-isopropylmaleate. The sequence is that of 3-isopropylmalate dehydratase large subunit from Burkholderia thailandensis (strain ATCC 700388 / DSM 13276 / CCUG 48851 / CIP 106301 / E264).